A 199-amino-acid polypeptide reads, in one-letter code: Peroxiredoxin-1 (199 aa).

N-acetylserine is present on serine 2. Residues 6–165 (AKIGHPAPNF…TLRLVQAFQF (160 aa)) enclose the Thioredoxin domain. Lysine 7 bears the N6-acetyllysine; alternate mark. A Glycyl lysine isopeptide (Lys-Gly) (interchain with G-Cter in SUMO2); alternate cross-link involves residue lysine 7. 2 positions are modified to N6-acetyllysine: lysine 16 and lysine 27. The residue at position 32 (serine 32) is a Phosphoserine. The residue at position 35 (lysine 35) is an N6-acetyllysine; alternate. Lysine 35 carries the post-translational modification N6-succinyllysine; alternate. Cysteine 52 serves as the catalytic Cysteine sulfenic acid (-SOH) intermediate. Threonine 90 is modified (phosphothreonine). Lysine 120 is covalently cross-linked (Glycyl lysine isopeptide (Lys-Gly) (interchain with G-Cter in SUMO2)). Lysine 136 is subject to N6-acetyllysine. Positions 176–199 (GWKPGSDTIKPDVQKSKEYFSKQK) are disordered. Residues 184 to 199 (IKPDVQKSKEYFSKQK) are compositionally biased toward basic and acidic residues. Lysine 185 participates in a covalent cross-link: Glycyl lysine isopeptide (Lys-Gly) (interchain with G-Cter in SUMO1). Lysine 197 carries the post-translational modification N6-acetyllysine.

This sequence belongs to the peroxiredoxin family. AhpC/Prx1 subfamily. In terms of assembly, homodimer; disulfide-linked, upon oxidation. 5 homodimers assemble to form a ring-like decamer. Interacts with GDPD5; forms a mixed-disulfide with GDPD5. Interacts with SESN1 and SESN2. Interacts with FAM107A. In terms of processing, phosphorylated on Thr-90 during the M-phase, which leads to a decrease in enzymatic activity. Post-translationally, acetylation increases reducing activity and resistance to superoxidation. Deacetylated by HDAC6 which decreases reducing activity. In terms of tissue distribution, detected in heart and skeletal muscle (at protein level).

The protein localises to the cytoplasm. It carries out the reaction a hydroperoxide + [thioredoxin]-dithiol = an alcohol + [thioredoxin]-disulfide + H2O. Its function is as follows. Thiol-specific peroxidase that catalyzes the reduction of hydrogen peroxide and organic hydroperoxides to water and alcohols, respectively. Plays a role in cell protection against oxidative stress by detoxifying peroxides and as sensor of hydrogen peroxide-mediated signaling events. Might participate in the signaling cascades of growth factors and tumor necrosis factor-alpha by regulating the intracellular concentrations of H(2)O(2). Reduces an intramolecular disulfide bond in GDPD5 that gates the ability to GDPD5 to drive postmitotic motor neuron differentiation. The chain is Peroxiredoxin-1 (PRDX1) from Myotis lucifugus (Little brown bat).